The primary structure comprises 491 residues: MDSISTAILLLLLALVCLLLTLSSRDKGKLPPGPRPLSILGNLLLLCSQDMLTSLTKLSKEYGSMYTVHLGPRRVVVLSGYQAVKEALVDQGEEFSGRGDYPAFFNFTKGNGIAFSSGDRWKVLRQFSIQILRNFGMGKRSIEERILEEGSFLLAELRKTEGEPFDPTFVLSRSVSNIICSVLFGSRFDYDDERLLTIIRLINDNFQIMSSPWGELYDIFPSLLDWVPGPHQRIFQNFKCLRDLIAHSVHDHQASLDPRSPRDFIQCFLTKMAEEKEDPLSHFHMDTLLMTTHNLLFGGTKTVSTTLHHAFLALMKYPKVQARVQEEIDLVVGRARLPALKDRAAMPYTDAVIHEVQRFADIIPMNLPHRVTRDTAFRGFLIPKGTDVITLLNTVHYDPSQFLTPQEFNPEHFLDANQSFKKSPAFMPFSAGRRLCLGESLARMELFLYLTAILQSFSLQPLGAPEDIDLTPLSSGLGNLPRPFQLCLRPR.

Position 436 (Cys436) interacts with heme.

Belongs to the cytochrome P450 family. Requires heme as cofactor. In terms of tissue distribution, expressed in lung. Rarely detected in liver and placenta.

It is found in the endoplasmic reticulum membrane. Its subcellular location is the microsome membrane. It catalyses the reaction an organic molecule + reduced [NADPH--hemoprotein reductase] + O2 = an alcohol + oxidized [NADPH--hemoprotein reductase] + H2O + H(+). May be involved in the metabolism of various pneumotoxicants including naphthalene. Is able to dealkylate ethoxycoumarin, propoxycoumarin, and pentoxyresorufin but possesses no activity toward ethoxyresorufin and only trace dearylation activity toward benzyloxyresorufin. Bioactivates 3-methylindole (3MI) by dehydrogenation to the putative electrophile 3-methylene-indolenine. The polypeptide is Cytochrome P450 2F1 (CYP2F1) (Homo sapiens (Human)).